A 311-amino-acid polypeptide reads, in one-letter code: Pyrimidine-specific ribonucleoside hydrolase RihA (311 aa).

The active site involves His-240.

The protein belongs to the IUNH family. RihA subfamily.

Functionally, hydrolyzes cytidine or uridine to ribose and cytosine or uracil, respectively. The polypeptide is Pyrimidine-specific ribonucleoside hydrolase RihA (Salmonella paratyphi A (strain ATCC 9150 / SARB42)).